Consider the following 122-residue polypeptide: Large ribosomal subunit protein bL12 (122 aa).

It belongs to the bacterial ribosomal protein bL12 family. Homodimer. Part of the ribosomal stalk of the 50S ribosomal subunit. Forms a multimeric L10(L12)X complex, where L10 forms an elongated spine to which 2 to 4 L12 dimers bind in a sequential fashion. Binds GTP-bound translation factors.

In terms of biological role, forms part of the ribosomal stalk which helps the ribosome interact with GTP-bound translation factors. Is thus essential for accurate translation. The sequence is that of Large ribosomal subunit protein bL12 from Neisseria lactamica.